The following is a 293-amino-acid chain: Protein boule-like (293 aa).

The span at 1–16 (METESRAQSTNQTQTD) shows a compositional bias: polar residues. Residues 1–39 (METESRAQSTNQTQTDSLSPSPNPVSPVPLNNPTSGPRY) are disordered. Phosphoserine occurs at positions 19, 21, and 26. The RRM domain occupies 45–122 (NRIFVGGIDF…KKLNIGPAIR (78 aa)). The DAZ domain occupies 172-196 (PSRSISSSPVMVAQPVYQQPAYHYQ).

The protein belongs to the RRM DAZ family. As to quaternary structure, interacts with DAZ1 and DAZL. Testis specific. Not expressed in early embryos, primoridal germ cells and spermatogonial cells. First expressed in the cytoplasm of spermatocytes and then persists through meiosis.

The protein localises to the cytoplasm. In terms of biological role, probable RNA-binding protein, which may be required during spermatogenesis. May act by binding to the 3'-UTR of mRNAs and regulating their translation. This is Protein boule-like from Mus musculus (Mouse).